The primary structure comprises 462 residues: Protoheme IX farnesyltransferase, mitochondrial (462 aa).

The next 7 helical transmembrane spans lie at 152–172, 173–193, 237–257, 269–289, 296–316, 348–368, and 411–431; these read LTIL…YTVS, LPEL…ANAI, MLFL…IVLY, IINT…GWAA, PGAW…FNAL, SLLM…DWVF, and AKKL…LAML.

This sequence belongs to the UbiA prenyltransferase family.

The protein localises to the mitochondrion membrane. Its function is as follows. Converts protoheme IX and farnesyl diphosphate to heme O. This is Protoheme IX farnesyltransferase, mitochondrial (COX10) from Debaryomyces hansenii (strain ATCC 36239 / CBS 767 / BCRC 21394 / JCM 1990 / NBRC 0083 / IGC 2968) (Yeast).